A 155-amino-acid polypeptide reads, in one-letter code: Deoxyuridine 5'-triphosphate nucleotidohydrolase (155 aa).

Residues 74-76, Asn87, and 91-93 each bind substrate; these read RSG and TID.

This sequence belongs to the dUTPase family. Mg(2+) is required as a cofactor.

The enzyme catalyses dUTP + H2O = dUMP + diphosphate + H(+). It functions in the pathway pyrimidine metabolism; dUMP biosynthesis; dUMP from dCTP (dUTP route): step 2/2. This enzyme is involved in nucleotide metabolism: it produces dUMP, the immediate precursor of thymidine nucleotides and it decreases the intracellular concentration of dUTP so that uracil cannot be incorporated into DNA. This Dinoroseobacter shibae (strain DSM 16493 / NCIMB 14021 / DFL 12) protein is Deoxyuridine 5'-triphosphate nucleotidohydrolase.